A 272-amino-acid chain; its full sequence is Large ribosomal subunit protein uL2 (272 aa).

The tract at residues 247–272 is disordered; the sequence is PWGQPCKGFKTRNNKRTNSSIIKRRK. Residues 262–272 are compositionally biased toward polar residues; sequence RTNSSIIKRRK.

The protein belongs to the universal ribosomal protein uL2 family. In terms of assembly, part of the 50S ribosomal subunit. Forms a bridge to the 30S subunit in the 70S ribosome.

In terms of biological role, one of the primary rRNA binding proteins. Required for association of the 30S and 50S subunits to form the 70S ribosome, for tRNA binding and peptide bond formation. It has been suggested to have peptidyltransferase activity; this is somewhat controversial. Makes several contacts with the 16S rRNA in the 70S ribosome. This is Large ribosomal subunit protein uL2 from Bdellovibrio bacteriovorus (strain ATCC 15356 / DSM 50701 / NCIMB 9529 / HD100).